Consider the following 421-residue polypeptide: 4-hydroxy-3-methylbut-2-en-1-yl diphosphate synthase (flavodoxin) (421 aa).

[4Fe-4S] cluster is bound by residues Cys298, Cys301, Cys344, and Glu351.

It belongs to the IspG family. [4Fe-4S] cluster is required as a cofactor.

It carries out the reaction (2E)-4-hydroxy-3-methylbut-2-enyl diphosphate + oxidized [flavodoxin] + H2O + 2 H(+) = 2-C-methyl-D-erythritol 2,4-cyclic diphosphate + reduced [flavodoxin]. It functions in the pathway isoprenoid biosynthesis; isopentenyl diphosphate biosynthesis via DXP pathway; isopentenyl diphosphate from 1-deoxy-D-xylulose 5-phosphate: step 5/6. Functionally, converts 2C-methyl-D-erythritol 2,4-cyclodiphosphate (ME-2,4cPP) into 1-hydroxy-2-methyl-2-(E)-butenyl 4-diphosphate. The polypeptide is 4-hydroxy-3-methylbut-2-en-1-yl diphosphate synthase (flavodoxin) (Neisseria meningitidis serogroup C (strain 053442)).